The chain runs to 182 residues: Nascent polypeptide-associated complex subunit alpha (182 aa).

An NAC-A/B domain is found at 17–81; sequence NKNEKKAKEL…AKVDDMNQRI (65 aa). Residues 120-148 are disordered; the sequence is ASLQGGESNADAAEDDNEEVDETGINPKD. Residues 131–141 are compositionally biased toward acidic residues; that stretch reads AAEDDNEEVDE. In terms of domain architecture, UBA spans 144–182; it reads INPKDIDLIVEQTRVSRGSAVKALKKHDGDMVNALMELS.

This sequence belongs to the NAC-alpha family. Part of the nascent polypeptide-associated complex (NAC), consisting of EGD2 and EGD1. NAC associates with ribosomes via EGD1.

The protein resides in the cytoplasm. It localises to the nucleus. In terms of biological role, component of the nascent polypeptide-associated complex (NAC), a dynamic component of the ribosomal exit tunnel, protecting the emerging polypeptides from interaction with other cytoplasmic proteins to ensure appropriate nascent protein targeting. The NAC complex also promotes mitochondrial protein import by enhancing productive ribosome interactions with the outer mitochondrial membrane and blocks the inappropriate interaction of ribosomes translating non-secretory nascent polypeptides with translocation sites in the membrane of the endoplasmic reticulum. EGD2 may also be involved in transcription regulation. The polypeptide is Nascent polypeptide-associated complex subunit alpha (EGD2) (Lodderomyces elongisporus (strain ATCC 11503 / CBS 2605 / JCM 1781 / NBRC 1676 / NRRL YB-4239) (Yeast)).